The following is a 421-amino-acid chain: Periplasmic [Fe] hydrogenase large subunit (421 aa).

4Fe-4S ferredoxin-type domains follow at residues 26–57 (HFVQ…MGEP) and 59–86 (SIPH…EAQS). [4Fe-4S] cluster contacts are provided by Cys35, Cys38, Cys41, Cys45, Cys66, Cys69, Cys72, Cys76, Cys179, Cys234, Cys378, and Cys382. Fe(2+) is bound at residue Cys382.

In terms of assembly, heterodimer of a large and a small subunit. It depends on [4Fe-4S] cluster as a cofactor. Fe(2+) serves as cofactor.

It is found in the periplasm. It carries out the reaction H2 + 2 oxidized [2Fe-2S]-[ferredoxin] = 2 reduced [2Fe-2S]-[ferredoxin] + 2 H(+). Its function is as follows. May be involved in hydrogen uptake for the reduction of sulfate to hydrogen sulfide in an electron transport chain. Cytochrome c3 is likely to be the physiological electron carrier for the enzyme. This Nitratidesulfovibrio vulgaris (strain ATCC 29579 / DSM 644 / CCUG 34227 / NCIMB 8303 / VKM B-1760 / Hildenborough) (Desulfovibrio vulgaris) protein is Periplasmic [Fe] hydrogenase large subunit (hydA).